The following is a 155-amino-acid chain: Myosin light chain alkali (155 aa).

EF-hand domains are found at residues R7–N41 and G80–S115.

Myosin is a hexamer of 2 heavy chains and 4 light chains.

In Drosophila virilis (Fruit fly), this protein is Myosin light chain alkali (Mlc1).